Reading from the N-terminus, the 433-residue chain is Trigger factor (433 aa).

One can recognise a PPIase FKBP-type domain in the interval 163 to 248; sequence GDTVNIDFSG…VNEIKFKDVP (86 aa).

This sequence belongs to the FKBP-type PPIase family. Tig subfamily.

It is found in the cytoplasm. The enzyme catalyses [protein]-peptidylproline (omega=180) = [protein]-peptidylproline (omega=0). Functionally, involved in protein export. Acts as a chaperone by maintaining the newly synthesized protein in an open conformation. Functions as a peptidyl-prolyl cis-trans isomerase. In Staphylococcus epidermidis (strain ATCC 35984 / DSM 28319 / BCRC 17069 / CCUG 31568 / BM 3577 / RP62A), this protein is Trigger factor.